Reading from the N-terminus, the 816-residue chain is H(+)/Cl(-) exchange transporter 5 (816 aa).

Topologically, residues 1–124 (MAMWQGAMDN…WALIHSVSDA (124 aa)) are cytoplasmic. 2 consecutive transmembrane segments (helical) span residues 125 to 162 (FSGW…ICTG) and 208 to 231 (VNYF…VKAF). The Selectivity filter part_1 signature appears at 237 to 241 (GSGIP). Residue Ser-238 participates in chloride binding. The segment at residues 240–247 (IPEIKTIL) is an intramembrane region (helical). 2 consecutive transmembrane segments (helical) span residues 256–275 (LGKW…VSSG) and 281–300 (EGPL…HCFN). Residues 279-283 (GKEGP) carry the Selectivity filter part_2 motif. 2 consecutive intramembrane regions (helical) follow at residues 312 to 324 (VLSA…VSVA) and 328 to 336 (PIGGVLFSL). 5 helical membrane-spanning segments follow: residues 348 to 366 (LWRS…RSIN), 389 to 414 (LVPF…IAWC), 422 to 442 (LGKY…ILAF), 498 to 518 (MWQL…TFGM), and 523 to 542 (GLFI…LGVG). A Selectivity filter part_3 motif is present at residues 523–527 (GLFIP). Phe-525 serves as a coordination point for chloride. An intramembrane region (helical) is located at residues 570-584 (GLYAMVGAAACLGGV). The note=Loop between two helices intramembrane region spans 585–587 (TRM). The helical intramembrane region spans 588-599 (TVSLVVIMFELT). The segment at residues 600 to 604 (GGLEY) is an intramembrane region (note=Loop between two helices). Residues 605 to 622 (IVPLMAAAMTSKWVADAL) traverse the membrane as a helical segment. Residues 623–816 (GREGIYDAHI…NQDPDSILFN (194 aa)) lie on the Cytoplasmic side of the membrane. A chloride-binding site is contributed by Tyr-628. 2 consecutive CBS domains span residues 656-720 (MKPR…ARKK) and 752-812 (ILDL…DPDS). ATP contacts are provided by residues Thr-666, 687–689 (YSG), and 794–797 (TKKD).

Belongs to the chloride channel (TC 2.A.49) family. ClC-5/CLCN5 subfamily. Interacts with NEDD4 and NEDD4L. Post-translationally, ubiquitinated by NEDD4L in the presence of albumin; which promotes endocytosis and proteasomal degradation. Kidney specific.

The protein resides in the golgi apparatus membrane. The protein localises to the endosome membrane. It is found in the cell membrane. The enzyme catalyses 2 chloride(in) + H(+)(out) = 2 chloride(out) + H(+)(in). Functionally, proton-coupled chloride transporter. Functions as antiport system and exchanges chloride ions against protons. Important for normal acidification of the endosome lumen. May play an important role in renal tubular function. The CLC channel family contains both chloride channels and proton-coupled anion transporters that exchange chloride or another anion for protons. The absence of conserved gating glutamate residues is typical for family members that function as channels. The sequence is that of H(+)/Cl(-) exchange transporter 5 (Clcn5) from Mus musculus (Mouse).